A 216-amino-acid chain; its full sequence is ATP-dependent dethiobiotin synthetase BioD (216 aa).

Residue 13–18 (EVGKTY) coordinates ATP. A Mg(2+)-binding site is contributed by T17. K38 is a catalytic residue. T42 is a substrate binding site. Residues D47 and 112–115 (EGVG) contribute to the ATP site. Mg(2+)-binding residues include D47 and E112.

This sequence belongs to the dethiobiotin synthetase family. As to quaternary structure, homodimer. The cofactor is Mg(2+).

The protein resides in the cytoplasm. It carries out the reaction (7R,8S)-7,8-diammoniononanoate + CO2 + ATP = (4R,5S)-dethiobiotin + ADP + phosphate + 3 H(+). It participates in cofactor biosynthesis; biotin biosynthesis; biotin from 7,8-diaminononanoate: step 1/2. In terms of biological role, catalyzes a mechanistically unusual reaction, the ATP-dependent insertion of CO2 between the N7 and N8 nitrogen atoms of 7,8-diaminopelargonic acid (DAPA, also called 7,8-diammoniononanoate) to form a ureido ring. This chain is ATP-dependent dethiobiotin synthetase BioD, found in Endomicrobium trichonymphae.